Here is a 507-residue protein sequence, read N- to C-terminus: ATP synthase subunit alpha, plastid (507 aa).

170-177 (GDRQTGKT) is a binding site for ATP.

Belongs to the ATPase alpha/beta chains family. In terms of assembly, F-type ATPases have 2 components, CF(1) - the catalytic core - and CF(0) - the membrane proton channel. CF(1) has five subunits: alpha(3), beta(3), gamma(1), delta(1), epsilon(1). CF(0) has four main subunits: a, b, b' and c.

Its subcellular location is the plastid membrane. The catalysed reaction is ATP + H2O + 4 H(+)(in) = ADP + phosphate + 5 H(+)(out). Produces ATP from ADP in the presence of a proton gradient across the membrane. The alpha chain is a regulatory subunit. This is ATP synthase subunit alpha, plastid from Cuscuta obtusiflora (Peruvian dodder).